A 97-amino-acid chain; its full sequence is YcgL domain-containing protein PSEEN4034 (97 aa).

The YcgL domain occupies 3–87 (RICSIYKSPR…PDDDYIEHLP (85 aa)).

The polypeptide is YcgL domain-containing protein PSEEN4034 (Pseudomonas entomophila (strain L48)).